A 362-amino-acid chain; its full sequence is Heat-inducible transcription repressor HrcA (362 aa).

The protein belongs to the HrcA family.

Its function is as follows. Negative regulator of class I heat shock genes (grpE-dnaK-dnaJ and groELS operons). Prevents heat-shock induction of these operons. The protein is Heat-inducible transcription repressor HrcA of Nitrobacter hamburgensis (strain DSM 10229 / NCIMB 13809 / X14).